The chain runs to 296 residues: Developmental pluripotency-associated protein 4 (296 aa).

Residues 1-13 (METAGDKKWSAEE) show a composition bias toward basic and acidic residues. The segment at 1 to 73 (METAGDKKWS…QTRRKVPIPP (73 aa)) is disordered. Positions 23–34 (SSQPSTAPAKAK) are enriched in low complexity. Residues 42-58 (KSETDNGCKPKEGKPQD) show a composition bias toward basic and acidic residues.

In terms of assembly, interacts with DPPA2. Interacts with PCGF1. As to expression, expressed in pluripotent embryonic cells, but not in differentiated somatic tissues.

It localises to the nucleus. Its function is as follows. May be involved in the maintenance of active epigenetic status of target genes. May inhibit differentiation of embryonic stem (ES) cells into a primitive ectoderm lineage. This is Developmental pluripotency-associated protein 4 (Dppa4) from Mus musculus (Mouse).